An 886-amino-acid polypeptide reads, in one-letter code: Methanogenesis regulatory histidine kinase FilI (886 aa).

2 helical membrane-spanning segments follow: residues 7 to 27 and 270 to 290; these read ILAF…TFMC and VVGI…FLEL. The HAMP domain maps to 290 to 344; that stretch reads LSILMPLATITSSVEAIREQEKGQGSRIPTVGPAELATLAESINEMLDHLESYNQ. In terms of domain architecture, PAS spans 349 to 419; sequence SEKRFRTIVD…EKDAGVLSGE (71 aa). Residues 421–473 enclose the PAC domain; that stretch reads FVGEVSAHTRAGSSMTFHAVKVPLRDDRGQVTGICGIARDITDIKEAGVELLK. The Histidine kinase domain occupies 674-886; the sequence is TVSHDLRSPL…TCVLFTLPTP (213 aa). Position 677 is a phosphohistidine; by autocatalysis (His-677).

Autophosphorylated.

It is found in the cell membrane. It carries out the reaction ATP + protein L-histidine = ADP + protein N-phospho-L-histidine.. In terms of biological role, member of the two-component regulatory system FilI/FilRs, which is involved in the regulation of methanogenesis. Autophosphorylates and specifically transfers the phosphoryl group to both FilR1 and FilR2. Its function is as follows. Could also catalyze the synthesis of the quorum sensing (QS) signal molecules carboxyl-acyl homoserine lactones (AHLs), which regulate the transition of the cellular morphology from short cells to filaments and of the carbon metabolic flux from biomass formation to methane production. In Methanothrix harundinacea (strain 6Ac) (Methanosaeta harundinacea), this protein is Methanogenesis regulatory histidine kinase FilI.